The primary structure comprises 602 residues: 4-hydroxy-3-methylbut-2-en-1-yl diphosphate synthase (flavodoxin) (602 aa).

Positions 508, 511, 543, and 550 each coordinate [4Fe-4S] cluster.

The protein belongs to the IspG family. [4Fe-4S] cluster serves as cofactor.

The enzyme catalyses (2E)-4-hydroxy-3-methylbut-2-enyl diphosphate + oxidized [flavodoxin] + H2O + 2 H(+) = 2-C-methyl-D-erythritol 2,4-cyclic diphosphate + reduced [flavodoxin]. It participates in isoprenoid biosynthesis; isopentenyl diphosphate biosynthesis via DXP pathway; isopentenyl diphosphate from 1-deoxy-D-xylulose 5-phosphate: step 5/6. In terms of biological role, converts 2C-methyl-D-erythritol 2,4-cyclodiphosphate (ME-2,4cPP) into 1-hydroxy-2-methyl-2-(E)-butenyl 4-diphosphate. This is 4-hydroxy-3-methylbut-2-en-1-yl diphosphate synthase (flavodoxin) from Chlamydia trachomatis serovar D (strain ATCC VR-885 / DSM 19411 / UW-3/Cx).